The primary structure comprises 357 residues: 3-isopropylmalate dehydrogenase, chloroplastic (357 aa).

The N-terminal 29 residues, 1–29 (MALQIAKRLLRCRADSVASSVRFFDRTFT), are a transit peptide targeting the chloroplast. Residues Arg120, Arg130, Arg151, and Asp238 each contribute to the substrate site. Residues Asp238, Asp262, and Asp266 each coordinate Mg(2+). 296–308 (GSAPDIAGKNLAN) provides a ligand contact to NAD(+).

The protein belongs to the isocitrate and isopropylmalate dehydrogenases family. As to quaternary structure, homodimer. It depends on Mg(2+) as a cofactor. The cofactor is Mn(2+).

It is found in the plastid. Its subcellular location is the chloroplast. The enzyme catalyses (2R,3S)-3-isopropylmalate + NAD(+) = 4-methyl-2-oxopentanoate + CO2 + NADH. The protein operates within amino-acid biosynthesis; L-leucine biosynthesis; L-leucine from 3-methyl-2-oxobutanoate: step 3/4. In terms of biological role, catalyzes the oxidation of 3-carboxy-2-hydroxy-4-methylpentanoate (3-isopropylmalate) to 3-carboxy-4-methyl-2-oxopentanoate. The product decarboxylates to 4-methyl-2 oxopentanoate. This chain is 3-isopropylmalate dehydrogenase, chloroplastic, found in Solanum tuberosum (Potato).